We begin with the raw amino-acid sequence, 122 residues long: Double-headed protease inhibitor, submandibular gland (122 aa).

Kazal-like domains follow at residues 10–70 (GGRK…ECDI) and 71–121 (ECTQ…QCQS). 6 disulfide bridges follow: C16/C50, C28/C47, C36/C68, C72/C101, C79/C98, and C87/C119.

It is found in the secreted. Functionally, this inhibitor is composed of two homologous actively inhibiting halves: one which inhibits trypsin, the other which inhibits elastase. The chain is Double-headed protease inhibitor, submandibular gland from Martes martes (European pine marten).